The sequence spans 446 residues: tRNA modification GTPase MnmE (446 aa).

(6S)-5-formyl-5,6,7,8-tetrahydrofolate is bound by residues arginine 22, glutamate 80, and lysine 119. The TrmE-type G domain occupies 215-370 (GLSLVIAGRP…LKKVIKQVVG (156 aa)). A K(+)-binding site is contributed by asparagine 225. GTP contacts are provided by residues 225–230 (NAGKST), 244–250 (TEIAGTT), and 269–272 (DTAG). Residue serine 229 participates in Mg(2+) binding. 3 residues coordinate K(+): threonine 244, isoleucine 246, and threonine 249. Threonine 250 provides a ligand contact to Mg(2+). Residue lysine 446 participates in (6S)-5-formyl-5,6,7,8-tetrahydrofolate binding.

Belongs to the TRAFAC class TrmE-Era-EngA-EngB-Septin-like GTPase superfamily. TrmE GTPase family. As to quaternary structure, homodimer. Heterotetramer of two MnmE and two MnmG subunits. The cofactor is K(+).

It is found in the cytoplasm. Its function is as follows. Exhibits a very high intrinsic GTPase hydrolysis rate. Involved in the addition of a carboxymethylaminomethyl (cmnm) group at the wobble position (U34) of certain tRNAs, forming tRNA-cmnm(5)s(2)U34. The polypeptide is tRNA modification GTPase MnmE (Legionella pneumophila (strain Paris)).